The primary structure comprises 115 residues: Large ribosomal subunit protein bL20c (115 aa).

Belongs to the bacterial ribosomal protein bL20 family.

It is found in the plastid. The protein resides in the chloroplast. Functionally, binds directly to 23S ribosomal RNA and is necessary for the in vitro assembly process of the 50S ribosomal subunit. It is not involved in the protein synthesizing functions of that subunit. This Emiliania huxleyi (Coccolithophore) protein is Large ribosomal subunit protein bL20c.